The chain runs to 842 residues: Homeobox-leucine zipper protein REVOLUTA (842 aa).

The disordered stretch occupies residues 1–20 (MEMAVANHRERSSDSMNRHL). Positions 7–20 (NHRERSSDSMNRHL) are enriched in basic and acidic residues. A DNA-binding region (homeobox) is located at residues 22–85 (SSGKYVRYTA…NRRCRDKQRK (64 aa)). The stretch at 90 to 121 (LQSVNRKLSAMNKLLMEENDRLQKQVSQLVCE) forms a coiled coil. One can recognise an START domain in the interval 151–379 (DANSPAGLLS…LAQESNGEVV (229 aa)).

It belongs to the HD-ZIP homeobox family. Class III subfamily. In terms of assembly, homodimer. Heterodimer with ZPR1, ZPR2, ZPR3 or ZPR4. Interacts with ESR1 and ESR2. Interacts with ZPR1, ZPR2, ZPR3 and ZPR4. Heterodimerization with ZPR3 prevents DNA binding by REV. Expressed in the interfascicular regions of stem and vascular bundles of young roots and leaves.

Its subcellular location is the nucleus. Its function is as follows. Probable transcription factor involved in the regulation of interfascicular fiber (cortical cells) and secondary xylem differentiation in the inflorescence stems. Required for lateral shoot meristems (LSMs) and flower meristems (FMs) initiation. May be involved in the determination of vascular patterning and organ polarity. Directly regulates the expression of AGO10, ZPR1, ZPR2, ZPR3 and ZPR4. Required to regulate adaxial-abaxial polarity and leaf axial patterning. The protein is Homeobox-leucine zipper protein REVOLUTA of Arabidopsis thaliana (Mouse-ear cress).